The primary structure comprises 120 residues: uncharacterized protein (120 aa).

This sequence to M.tuberculosis Rv0026 and Rv0739.

This is an uncharacterized protein from Mycobacterium tuberculosis (strain CDC 1551 / Oshkosh).